Reading from the N-terminus, the 443-residue chain is Phosphoglucosamine mutase (443 aa).

The active-site Phosphoserine intermediate is Ser103. The Mg(2+) site is built by Ser103, Asp244, Asp246, and Asp248. A Phosphoserine modification is found at Ser103.

This sequence belongs to the phosphohexose mutase family. The cofactor is Mg(2+). In terms of processing, activated by phosphorylation.

It carries out the reaction alpha-D-glucosamine 1-phosphate = D-glucosamine 6-phosphate. In terms of biological role, catalyzes the conversion of glucosamine-6-phosphate to glucosamine-1-phosphate. The polypeptide is Phosphoglucosamine mutase (Pelagibacter ubique (strain HTCC1062)).